The chain runs to 356 residues: Zinc finger CW-type PWWP domain protein 2 (356 aa).

Residues M24–P79 form a CW-type zinc finger. The Zn(2+) site is built by C33, C38, C60, and C71. Positions L98–T162 constitute a PWWP domain. The segment at Q279–C307 is disordered.

Histone methylation reader which binds to non-methylated (H3K4me0), monomethylated (H3K4me1), dimethylated (H3K4me2) and trimethylated (H3K4me3) 'Lys-4' on histone H3. The order of binding preference is H3K4me3 &gt; H3K4me2 &gt; H3K4me1 &gt; H3K4me0. The protein is Zinc finger CW-type PWWP domain protein 2 (ZCWPW2) of Homo sapiens (Human).